Consider the following 364-residue polypeptide: Methylthioribose-1-phosphate isomerase (364 aa).

Residues 53–55, arginine 90, and glutamine 200 each bind substrate; that span reads RGA. Aspartate 241 acts as the Proton donor in catalysis. 251-252 contributes to the substrate binding site; the sequence is NK.

It belongs to the eIF-2B alpha/beta/delta subunits family. MtnA subfamily.

The enzyme catalyses 5-(methylsulfanyl)-alpha-D-ribose 1-phosphate = 5-(methylsulfanyl)-D-ribulose 1-phosphate. It functions in the pathway amino-acid biosynthesis; L-methionine biosynthesis via salvage pathway; L-methionine from S-methyl-5-thio-alpha-D-ribose 1-phosphate: step 1/6. Its function is as follows. Catalyzes the interconversion of methylthioribose-1-phosphate (MTR-1-P) into methylthioribulose-1-phosphate (MTRu-1-P). The sequence is that of Methylthioribose-1-phosphate isomerase from Methylobacterium nodulans (strain LMG 21967 / CNCM I-2342 / ORS 2060).